Here is a 157-residue protein sequence, read N- to C-terminus: Small ribosomal subunit protein uS7 (157 aa).

Belongs to the universal ribosomal protein uS7 family. Part of the 30S ribosomal subunit. Contacts proteins S9 and S11.

One of the primary rRNA binding proteins, it binds directly to 16S rRNA where it nucleates assembly of the head domain of the 30S subunit. Is located at the subunit interface close to the decoding center, probably blocks exit of the E-site tRNA. In Opitutus terrae (strain DSM 11246 / JCM 15787 / PB90-1), this protein is Small ribosomal subunit protein uS7.